The sequence spans 447 residues: Serine/threonine-protein phosphatase 2A 55 kDa regulatory subunit B gamma isoform (447 aa).

WD repeat units follow at residues 22–61 (TEADVISTVEFNHTGELLATGDKGGRVVIFQREPESKNAP), 87–128 (EIEE…KRPE), 171–209 (GHTYHINSISVNSDCETYMSADDLRINLWHLAITDRSFN), 220–260 (DLTE…LCDK), 279–317 (EIISSVSDVKFSHSGRYMLTRDYLTVKVWDLNMEARPIE), 334–375 (ESDC…DVTL), and 410–446 (DFTKKILHTAWHPAENIIAIAATNNLYIFQDKVNSDM).

This sequence belongs to the phosphatase 2A regulatory subunit B family. PP2A consists of a common heterodimeric core enzyme, composed of a 36 kDa catalytic subunit (subunit C) and a 65 kDa constant regulatory subunit (PR65 or subunit A), that associates with a variety of regulatory subunits. Proteins that associate with the core dimer include three families of regulatory subunits B (the R2/B/PR55/B55, R3/B''/PR72/PR130/PR59 and R5/B'/B56 families), the 48 kDa variable regulatory subunit, viral proteins, and cell signaling molecules. Interacts with IER5. As to expression, highly expressed in brain.

The B regulatory subunit might modulate substrate selectivity and catalytic activity, and might also direct the localization of the catalytic enzyme to a particular subcellular compartment. The polypeptide is Serine/threonine-protein phosphatase 2A 55 kDa regulatory subunit B gamma isoform (Ppp2r2c) (Rattus norvegicus (Rat)).